Consider the following 437-residue polypeptide: F-box protein At3g62430 (437 aa).

An F-box domain is found at 1–49; the sequence is MDRISNLPDGVIYRVISLLSTKEATCLKYTSKNWLNLVTIIPIAVFVDS.

This chain is F-box protein At3g62430, found in Arabidopsis thaliana (Mouse-ear cress).